Here is a 346-residue protein sequence, read N- to C-terminus: Methylthioribose-1-phosphate isomerase (346 aa).

Substrate-binding positions include 46-48 (RGA), R89, and Q196. The Proton donor role is filled by D237. 247–248 (NK) is a substrate binding site.

It belongs to the eIF-2B alpha/beta/delta subunits family. MtnA subfamily.

It carries out the reaction 5-(methylsulfanyl)-alpha-D-ribose 1-phosphate = 5-(methylsulfanyl)-D-ribulose 1-phosphate. It functions in the pathway amino-acid biosynthesis; L-methionine biosynthesis via salvage pathway; L-methionine from S-methyl-5-thio-alpha-D-ribose 1-phosphate: step 1/6. Its function is as follows. Catalyzes the interconversion of methylthioribose-1-phosphate (MTR-1-P) into methylthioribulose-1-phosphate (MTRu-1-P). The protein is Methylthioribose-1-phosphate isomerase of Geobacter metallireducens (strain ATCC 53774 / DSM 7210 / GS-15).